We begin with the raw amino-acid sequence, 1046 residues long: Phospholipase D zeta 2 (1046 aa).

Positions 45–205 (PKAAIVSVSR…KEVCKFLEVS (161 aa)) constitute a PX domain. Residues 215-343 (SKMKEGYVTV…WVKAVDEAGC (129 aa)) form the PH domain. Residues 472-499 (YLWSHHEKIVIVDYQVCFIGGLDLCFGR) form the PLD phosphodiesterase 1 domain. Catalysis depends on residues histidine 477, lysine 479, and aspartate 484. Over residues 653-667 (GRGDLKLDSGARQDP) the composition is skewed to basic and acidic residues. The disordered stretch occupies residues 653–677 (GRGDLKLDSGARQDPGETSEESDLD). One can recognise a PLD phosphodiesterase 2 domain in the interval 847–874 (SQIYVHSKLMIVDDRIAVIGSSNINDRS). Active-site residues include histidine 852, lysine 854, and aspartate 859.

The protein belongs to the phospholipase D family. PXPH-PLD subfamily. Requires Does not require Ca(2+) or any other cation for activity. as cofactor. Expressed in seedlings, roots, leaves, stems and flowers. Highest expression in roots. Detected only in the meristematic regions up to 4 days after germination and then at later stages in all tissues.

It catalyses the reaction a 1,2-diacyl-sn-glycero-3-phosphocholine + H2O = a 1,2-diacyl-sn-glycero-3-phosphate + choline + H(+). Functionally, hydrolyzes glycerol-phospholipids at the terminal phosphodiesteric bond to generate phosphatidic acids (PA). Phosphatidylcholine-selective. Regulates vesicle trafficking and auxin responses. Required for the normal cycling of PIN-2 containing vesicles. Contributes to the supply of inorganic phosphorus for cell metabolism and diacylglycerol moieties for galactolipid synthesis in phosphorus-starved roots. Involved in root elongation during phosphate limitation. The polypeptide is Phospholipase D zeta 2 (Arabidopsis thaliana (Mouse-ear cress)).